Here is an 80-residue protein sequence, read N- to C-terminus: MATPTQSPTNVPEETDPFFYDYATVQTVGMTLATIMFVLGIIIILSKKVKCRKADSRSESPTCKSCKSELPSSAPGGGGV.

Topologically, residues 1–22 are extracellular; that stretch reads MATPTQSPTNVPEETDPFFYDY. 3 O-linked (GlcNAc) threonine glycosylation sites follow: Thr3, Thr5, and Thr9. Residues 23–45 form a helical membrane-spanning segment; the sequence is ATVQTVGMTLATIMFVLGIIIIL. At 46–80 the chain is on the cytoplasmic side; sequence SKKVKCRKADSRSESPTCKSCKSELPSSAPGGGGV. Residues 55 to 80 are disordered; sequence DSRSESPTCKSCKSELPSSAPGGGGV. Ser73 bears the Phosphoserine mark.

The protein belongs to the FXYD family. Regulatory subunit of the sodium/potassium-transporting ATPase which is composed of a catalytic alpha subunit, a non-catalytic beta subunit and an additional regulatory subunit. The regulatory subunit, a member of the FXYD protein family, modulates the enzymatic activity in a tissue- and isoform-specific way by changing affinities of the Na+/K+-ATPase toward Na(+), K(+) or ATP. O-glycosylated; required for stabilization and translocation to the plasma membrane.

It is found in the cell membrane. Functionally, associates with and regulates the activity of the sodium/potassium-transporting ATPase (NKA) which catalyzes the hydrolysis of ATP coupled with the exchange of Na(+) and K(+) ions across the plasma membrane. Reduces the apparent affinity for external K(+), an effect that depends on the presence of external Na(+) and voltage. Increases the apparent affinity for intracellular Na(+). This chain is FXYD domain-containing ion transport regulator 7 (Fxyd7), found in Mus musculus (Mouse).